Here is a 164-residue protein sequence, read N- to C-terminus: Dehydrin Rab16C (164 aa).

A compositionally biased stretch (gly residues) spans 42 to 51 (MGGHHAGAGG). The tract at residues 42-164 (MGGHHAGAGG…KIKEKLPGQH (123 aa)) is disordered. Over residues 105–115 (GNNQQQQQMMG) the composition is skewed to low complexity. The span at 128–138 (GMTGAGTGTGV) shows a compositional bias: gly residues. The span at 147-164 (GEKKGFMDKIKEKLPGQH) shows a compositional bias: basic and acidic residues.

The protein belongs to the plant dehydrin family.

This chain is Dehydrin Rab16C (RAB16C), found in Oryza sativa subsp. japonica (Rice).